Consider the following 956-residue polypeptide: Probable hypoxanthine oxidase XdhD (956 aa).

Mo-molybdopterin is bound by residues Q414, F445, and A727.

The protein belongs to the xanthine dehydrogenase family. It depends on [2Fe-2S] cluster as a cofactor. The cofactor is Mo-molybdopterin.

Its function is as follows. Probably has no xanthine dehydrogenase activity; however deletion results in increased adenine sensitivity, suggesting that this protein contributes to the conversion of adenine to guanine nucleotides during purine salvage. In Escherichia coli O157:H7, this protein is Probable hypoxanthine oxidase XdhD (xdhD).